We begin with the raw amino-acid sequence, 515 residues long: Fatty acyl-CoA reductase 1 (515 aa).

The Cytoplasmic portion of the chain corresponds to 1 to 465; the sequence is MVSIPEYYEG…ARKHLNKLRN (465 aa). The segment at 451–507 is necessary and sufficient for PEX19-mediated localization into peroxisome membrane; sequence SGLPAARKHLNKLRNIRYGFNTILVILIWRIFIARSQMARNIWYFVVSLCYKFLSYF. Residues 466–483 form a helical membrane-spanning segment; the sequence is IRYGFNTILVILIWRIFI. Residues 484–515 are Peroxisomal-facing; the sequence is ARSQMARNIWYFVVSLCYKFLSYFRASSTMRY.

It belongs to the fatty acyl-CoA reductase family. As to quaternary structure, interacts with PEX19; PEX19 mediates the targeting of FAR1 to peroxisomes.

The protein resides in the peroxisome membrane. The catalysed reaction is a long-chain fatty acyl-CoA + 2 NADPH + 2 H(+) = a long-chain primary fatty alcohol + 2 NADP(+) + CoA. The enzyme catalyses hexadecanoyl-CoA + 2 NADPH + 2 H(+) = hexadecan-1-ol + 2 NADP(+) + CoA. It catalyses the reaction octadecanoyl-CoA + 2 NADPH + 2 H(+) = octadecan-1-ol + 2 NADP(+) + CoA. It carries out the reaction eicosanoyl-CoA + 2 NADPH + 2 H(+) = eicosan-1-ol + 2 NADP(+) + CoA. The catalysed reaction is (9Z)-octadecenoyl-CoA + 2 NADPH + 2 H(+) = (9Z)-octadecen-1-ol + 2 NADP(+) + CoA. The enzyme catalyses (9Z,12Z)-octadecadienoyl-CoA + 2 NADPH + 2 H(+) = (9Z,12Z)-octadecadien-1-ol + 2 NADP(+) + CoA. It catalyses the reaction 16-methylheptadecanoyl-CoA + 2 NADPH + 2 H(+) = 16-methylheptadecan-1-ol + 2 NADP(+) + CoA. It carries out the reaction 18-methylnonadecanoyl-CoA + 2 NADPH + 2 H(+) = 18-methylnonadecan-1-ol + 2 NADP(+) + CoA. Its function is as follows. Catalyzes the reduction of saturated and unsaturated C16 or C18 fatty acyl-CoA to fatty alcohols. It plays an essential role in the production of ether lipids/plasmalogens which synthesis requires fatty alcohols. In parallel, it is also required for wax monoesters production since fatty alcohols also constitute a substrate for their synthesis. The sequence is that of Fatty acyl-CoA reductase 1 from Homo sapiens (Human).